The primary structure comprises 615 residues: Vitamin B12 transporter BtuB (615 aa).

The first 20 residues, Met-1–Ala-20, serve as a signal peptide directing secretion. The TonB box signature appears at Asn-26 to Asn-33. The region spanning Pro-38 to Thr-152 is the TBDR plug domain. Residues Ser-85, Asn-92, and Ile-110 to Ser-111 contribute to the cyanocob(III)alamin site. The region spanning Lys-155–Phe-615 is the TBDR beta-barrel domain. A run of 3 beta stranded transmembrane segments spans residues Thr-158–Gly-165, Tyr-169–Gln-178, and Thr-184–Thr-195. Ca(2+) contacts are provided by Asp-199, Gln-210, Asp-212, and Asp-214. A run of 2 beta stranded transmembrane segments spans residues Phe-216–Glu-226 and Asp-231–Asp-247. Ca(2+) contacts are provided by Tyr-248, Asp-249, and Asp-255. The next 14 beta stranded transmembrane spans lie at Arg-257 to Gln-271, Gly-273 to Asp-290, Thr-303 to Gln-319, Ala-322 to Trp-331, Glu-347 to Ala-363, Ile-365 to Asp-375, Phe-379 to Ile-394, Tyr-397 to Asn-411, Glu-429 to Glu-438, Val-444 to Asn-453, Val-468 to Phe-486, Pro-490 to Ala-505, Arg-513 to Trp-525, and Asp-531 to Asp-546. Position 303 (Thr-303) interacts with cyanocob(III)alamin. Position 513 (Arg-513) interacts with cyanocob(III)alamin. Cyanocob(III)alamin is bound at residue Tyr-547. 3 beta stranded membrane passes run Thr-559–Ser-573, Ile-586–Ala-597, and Ala-603–Phe-615. Residues Tyr-598–Phe-615 carry the TonB C-terminal box motif.

It belongs to the TonB-dependent receptor family. BtuB (TC 1.B.14.3.1) subfamily.

It is found in the cell outer membrane. Functionally, involved in the active translocation of vitamin B12 (cyanocobalamin) across the outer membrane to the periplasmic space. It derives its energy for transport by interacting with the trans-periplasmic membrane protein TonB. The protein is Vitamin B12 transporter BtuB of Pectobacterium atrosepticum (strain SCRI 1043 / ATCC BAA-672) (Erwinia carotovora subsp. atroseptica).